Reading from the N-terminus, the 380-residue chain is MYG1 exonuclease (380 aa).

A mitochondrion-targeting transit peptide spans 1–46; sequence MGRRFLRGILTLPLRSVLQAQHRMLGSEQDPPAKRPRNNLMAPPRI. An N6-acetyllysine mark is found at lysine 266 and lysine 272.

This sequence belongs to the MYG1 family. Ubiquitously expressed, with highest levels in testis.

It is found in the nucleus. The protein resides in the nucleoplasm. Its subcellular location is the mitochondrion matrix. It localises to the nucleolus. 3'-5' RNA exonuclease which cleaves in situ on specific transcripts in both nucleus and mitochondrion. Involved in regulating spatially segregated organellar RNA processing, acts as a coordinator of nucleo-mitochondrial crosstalk. In nucleolus, processes pre-ribosomal RNA involved in ribosome assembly and alters cytoplasmic translation. In mitochondrial matrix, processes 3'-termini of the mito-ribosomal and messenger RNAs and controls translation of mitochondrial proteins. In Mus musculus (Mouse), this protein is MYG1 exonuclease.